Here is a 311-residue protein sequence, read N- to C-terminus: Methionyl-tRNA formyltransferase (311 aa).

Residue 110-113 participates in (6S)-5,6,7,8-tetrahydrofolate binding; sequence SLLP.

This sequence belongs to the Fmt family.

The enzyme catalyses L-methionyl-tRNA(fMet) + (6R)-10-formyltetrahydrofolate = N-formyl-L-methionyl-tRNA(fMet) + (6S)-5,6,7,8-tetrahydrofolate + H(+). Attaches a formyl group to the free amino group of methionyl-tRNA(fMet). The formyl group appears to play a dual role in the initiator identity of N-formylmethionyl-tRNA by promoting its recognition by IF2 and preventing the misappropriation of this tRNA by the elongation apparatus. In Streptococcus pyogenes serotype M28 (strain MGAS6180), this protein is Methionyl-tRNA formyltransferase.